The chain runs to 388 residues: Dual-specificity RNA methyltransferase RlmN (388 aa).

The active-site Proton acceptor is Glu109. The 240-residue stretch at 115-354 folds into the Radical SAM core domain; the sequence is EDDRATLCVS…TIVRKTRGDD (240 aa). Cys122 and Cys359 are oxidised to a cystine. [4Fe-4S] cluster-binding residues include Cys129, Cys133, and Cys136. S-adenosyl-L-methionine is bound by residues 183 to 184, Ser215, 237 to 239, and Asn316; these read GE and SLH. The active-site S-methylcysteine intermediate is Cys359.

It belongs to the radical SAM superfamily. RlmN family. The cofactor is [4Fe-4S] cluster.

The protein localises to the cytoplasm. The catalysed reaction is adenosine(2503) in 23S rRNA + 2 reduced [2Fe-2S]-[ferredoxin] + 2 S-adenosyl-L-methionine = 2-methyladenosine(2503) in 23S rRNA + 5'-deoxyadenosine + L-methionine + 2 oxidized [2Fe-2S]-[ferredoxin] + S-adenosyl-L-homocysteine. It carries out the reaction adenosine(37) in tRNA + 2 reduced [2Fe-2S]-[ferredoxin] + 2 S-adenosyl-L-methionine = 2-methyladenosine(37) in tRNA + 5'-deoxyadenosine + L-methionine + 2 oxidized [2Fe-2S]-[ferredoxin] + S-adenosyl-L-homocysteine. Specifically methylates position 2 of adenine 2503 in 23S rRNA and position 2 of adenine 37 in tRNAs. m2A2503 modification seems to play a crucial role in the proofreading step occurring at the peptidyl transferase center and thus would serve to optimize ribosomal fidelity. In Salmonella typhi, this protein is Dual-specificity RNA methyltransferase RlmN.